The following is a 378-amino-acid chain: Lysocardiolipin acyltransferase 1 (378 aa).

2 consecutive transmembrane segments (helical) span residues 9-29 (FVVALFLGSFFGSIFMLGPFL) and 46-66 (IVATWLTLPVALLEMVFGAKV). An HXXXXD motif motif is present at residues 85–90 (HRTRMD). Transmembrane regions (helical) follow at residues 302–322 (LRVLAVKCISLLYWTVFPMGT) and 336–358 (FAAMIIIFVAQQKIFGGLELIEL).

It belongs to the 1-acyl-sn-glycerol-3-phosphate acyltransferase family.

Its subcellular location is the endoplasmic reticulum membrane. It catalyses the reaction a 1-acyl-sn-glycero-3-phosphate + an acyl-CoA = a 1,2-diacyl-sn-glycero-3-phosphate + CoA. It carries out the reaction a 1-acyl-sn-glycero-3-phospho-(1D-myo-inositol) + an acyl-CoA = a 1,2-diacyl-sn-glycero-3-phospho-(1D-myo-inositol) + CoA. The catalysed reaction is 1-acyl-sn-glycero-3-phospho-(1'-sn-glycerol) + an acyl-CoA = a 1,2-diacyl-sn-glycero-3-phospho-(1'-sn-glycerol) + CoA. The enzyme catalyses 1-hexadecanoyl-sn-glycero-3-phosphate + (9Z)-octadecenoyl-CoA = 1-hexadecanoyl-2-(9Z-octadecenoyl)-sn-glycero-3-phosphate + CoA. It catalyses the reaction 1-(9Z-octadecenoyl)-sn-glycero-3-phosphate + (9Z)-octadecenoyl-CoA = 1,2-di-(9Z-octadecenoyl)-sn-glycero-3-phosphate + CoA. It carries out the reaction 1-(9Z,12Z)-octadecadienoyl-sn-glycero-3-phosphate + (9Z)-octadecenoyl-CoA = 1-(9Z,12Z)-octadecadienoyl-2-(9Z)-octadecenoyl-sn-glycero-3-phosphate + CoA. The catalysed reaction is 1-(9Z,12Z,15Z)-octadecatrienoyl-sn-glycero-3-phosphate + (9Z)-octadecenoyl-CoA = 1-(9Z,12Z,15Z)-octadecatrienoyl-2-(9Z)-octadecenoyl-sn-glycero-3-phosphate + CoA. The enzyme catalyses 1-(9Z-octadecenoyl)-sn-glycero-3-phosphate + hexadecanoyl-CoA = 1-(9Z)-octadecenoyl-2-hexadecanoyl-sn-glycero-3-phosphate + CoA. It catalyses the reaction 1-(9Z-octadecenoyl)-sn-glycero-3-phosphate + octadecanoyl-CoA = 1-(9Z-octadecenoyl)-2-octadecanoyl-sn-glycero-3-phosphate + CoA. It carries out the reaction 1-acyl-sn-glycero-3-phospho-(1'-sn-glycerol) + (9Z)-octadecenoyl-CoA = 1-acyl-2-(9Z-octadecenoyl)-sn-glycero-3-phospho-(1'-sn-glycerol) + CoA. The catalysed reaction is a 1-acyl-sn-glycero-3-phospho-(1D-myo-inositol) + (9Z)-octadecenoyl-CoA = a 1-acyl-2-(9Z-octadecenoyl)-sn-glycero-3-phospho-(1D-myo-inositol) + CoA. The enzyme catalyses 1-hexadecanoyl-sn-glycero-3-phospho-(1D-myo-inositol) + hexadecanoyl-CoA = 1,2-dihexadecanoyl-sn-glycero-3-phospho-(1D-myo-inositol) + CoA. It catalyses the reaction 1-hexadecanoyl-sn-glycero-3-phospho-(1D-myo-inositol) + octadecanoyl-CoA = 1-hexadecanoyl-2-octadecanoyl-sn-glycero-3-phospho-(1D-myo-inositol) + CoA. It carries out the reaction 1-hexadecanoyl-sn-glycero-3-phospho-(1D-myo-inositol) + (9Z)-octadecenoyl-CoA = 1-hexadecanoyl-2-(9Z-octadecenoyl)-sn-glycero-3-phospho-(1D-myo-inositol) + CoA. The catalysed reaction is 1-hexadecanoyl-sn-glycero-3-phospho-(1D-myo-inositol) + (9Z,12Z)-octadecadienoyl-CoA = 1-hexadecanoyl-2-(9Z,12Z-octadecadienoyl)-sn-glycero-3-phospho-(1D-myo-inositol) + CoA. The enzyme catalyses 1-hexadecanoyl-sn-glycero-3-phospho-(1D-myo-inositol) + (5Z,8Z,11Z,14Z)-eicosatetraenoyl-CoA = 1-hexadecanoyl-2-(5Z,8Z,11Z,14Z-eicosatetraenoyl)-sn-glycero-3-phospho-D-myo-inositol + CoA. It catalyses the reaction 1-hexadecanoyl-sn-glycero-3-phospho-(1'-sn-glycerol) + hexadecanoyl-CoA = 1,2-dihexadecanoyl-sn-glycero-3-phospho-(1'-sn-glycerol) + CoA. It carries out the reaction 1-hexadecanoyl-sn-glycero-3-phospho-(1'-sn-glycerol) + octadecanoyl-CoA = 1-hexadecanoyl-2-octadecanoyl-sn-glycero-3-phospho-(1'-sn-glycerol) + CoA. The catalysed reaction is 1-hexadecanoyl-sn-glycero-3-phospho-(1'-sn-glycerol) + (9Z)-octadecenoyl-CoA = 1-hexadecanoyl-2-(9Z-octadecenoyl)-sn-glycero-3-phospho-(1'-sn-glycerol) + CoA. The enzyme catalyses 1-hexadecanoyl-sn-glycero-3-phospho-(1'-sn-glycerol) + (9Z,12Z)-octadecadienoyl-CoA = 1-hexadecanoyl-2-(9Z,12Z-octadecadienoyl)-sn-glycero-3-phospho-(1'-sn-glycerol) + CoA. It catalyses the reaction 1-tetradecanoyl-sn-glycero-3-phospho-(1'-sn-glycerol) + (9Z)-octadecenoyl-CoA = 1-tetradecanoyl-2-(9Z-octadecenoyl)-sn-glycero-3-phospho-(1'-sn-glycerol) + CoA. It carries out the reaction 1-octadecanoyl-sn-glycero-3-phospho-(1'-sn-glycerol) + (9Z)-octadecenoyl-CoA = 1-octadecanoyl-2-(9Z-octadecenoyl)-sn-glycero-3-phospho-(1'-sn-glycerol) + CoA. The catalysed reaction is 1-(9Z-octadecenoyl)-sn-glycero-3-phospho-(1'-sn-glycerol) + (9Z)-octadecenoyl-CoA = 1,2-di-(9Z-octadecenoyl)-sn-glycero-3-phospho-(1'-sn-glycerol) + CoA. The enzyme catalyses 1-hexadecanoyl-sn-glycero-3-phospho-(1D-myo-inositol) + dodecanoyl-CoA = 1-hexadecanoyl-2-dodecanoyl-sn-glycero-3-phospho-(1D-myo-inositol) + CoA. It catalyses the reaction 1',3'-bis-[1-acyl-sn-glycero-3-phospho]-glycerol + (9Z)-octadecenoyl-CoA = 1'-[1-acyl-2-(9Z)-octadecenoyl-sn-glycero-3-phospho],3'-[1-acyl,2-hydroxy-sn-glycero-3-phospho]-glycerol + CoA. It carries out the reaction 1'-[1,2-diacyl-sn-glycero-3-phospho],3'-[1-acyl-sn-glycero-3-phospho]-glycerol + (9Z)-octadecenoyl-CoA = 1'-[1,2-diacyl-sn-glycero-3-phospho],3'-[1-acyl,2-(9Z)-octadecenoyl-sn-glycero-3-phospho]-glycerol + CoA. The catalysed reaction is 1'-[1,2-diacyl-sn-glycero-3-phospho],3'-[1-acyl-sn-glycero-3-phospho]-glycerol + (9Z,12Z)-octadecadienoyl-CoA = 1'-[1,2-diacyl-sn-glycero-3-phospho],3'-[1-acyl,2-(9Z,12Z)-octadecadienoyl-sn-glycero-3-phospho]-glycerol + CoA. The enzyme catalyses 1'-[1,2-diacyl-sn-glycero-3-phospho],3'-[1-acyl-sn-glycero-3-phospho]-glycerol + dodecanoyl-CoA = 1'-[1,2-diacyl-sn-glycero-3-phospho],3'-[1-acyl,2-dodecanoyl-sn-glycero-3-phospho]-glycerol + CoA. It catalyses the reaction 1',3'-bis-[1-acyl-sn-glycero-3-phospho]-glycerol + dodecanoyl-CoA = 1'-[1-acyl-2-dodecanoyl-sn-glycero-3-phospho],3'-[1-acyl,2-hydroxy-sn-glycero-3-phospho]-glycerol + CoA. It carries out the reaction a 1-acyl-sn-glycero-3-phosphate + (9Z)-octadecenoyl-CoA = a 1-acyl-2-(9Z-octadecenoyl)-sn-glycero-3-phosphate + CoA. The catalysed reaction is 1',3'-bis-[1-acyl-sn-glycero-3-phospho]-glycerol + (9Z,12Z)-octadecadienoyl-CoA = 1'-[1-acyl-2-(9Z,12Z)-octadecadienoyl-sn-glycero-3-phospho],3'-[1-acyl,2-hydroxy-sn-glycero-3-phospho]-glycerol + CoA. The enzyme catalyses 1',3'-bis-[1-acyl-sn-glycero-3-phospho]-glycerol + hexadecanoyl-CoA = 1'-[1-acyl-2-hexadecanoyl-sn-glycero-3-phospho],3'-[1-acyl,2-hydroxy-sn-glycero-3-phospho]-glycerol + CoA. It catalyses the reaction 1',3'-bis-[1-acyl-sn-glycero-3-phospho]-glycerol + octadecanoyl-CoA = 1'-[1-acyl-2-octadecanoyl-sn-glycero-3-phospho],3'-[1-acyl,2-hydroxy-sn-glycero-3-phospho]-glycerol + CoA. It carries out the reaction 1'-[1,2-diacyl-sn-glycero-3-phospho],3'-[1-acyl-sn-glycero-3-phospho]-glycerol + octanoyl-CoA = 1'-[1,2-diacyl-sn-glycero-3-phospho],3'-[1-acyl,2-octanoyl-sn-glycero-3-phospho]-glycerol + CoA. The catalysed reaction is 1',3'-bis-[1-acyl-sn-glycero-3-phospho]-glycerol + octanoyl-CoA = 1'-[1-acyl-2-octanoyl-sn-glycero-3-phospho],3'-[1-acyl,2-hydroxy-sn-glycero-3-phospho]-glycerol + CoA. The enzyme catalyses 1'-[1,2-diacyl-sn-glycero-3-phospho],3'-[1-acyl-sn-glycero-3-phospho]-glycerol + hexadecanoyl-CoA = 1'-[1,2-diacyl-sn-glycero-3-phospho],3'-[1-acyl,2-hexadecanoyl-sn-glycero-3-phospho]-glycerol + CoA. It catalyses the reaction 1'-[1,2-diacyl-sn-glycero-3-phospho],3'-[1-acyl-sn-glycero-3-phospho]-glycerol + (5Z,8Z,11Z,14Z)-eicosatetraenoyl-CoA = 1'-[1,2-diacyl-sn-glycero-3-phospho],3'-[1-acyl,2-(5Z,8Z,11Z,14Z)-eicosatetraenoyl-sn-glycero-3-phospho]-glycerol + CoA. It carries out the reaction 1',3'-bis-[1-acyl-sn-glycero-3-phospho]-glycerol + (5Z,8Z,11Z,14Z)-eicosatetraenoyl-CoA = 1'-[1-acyl-2-(5Z,8Z,11Z,14Z)-eicosatetraenoyl-sn-glycero-3-phospho],3'-[1-acyl,2-hydroxy-sn-glycero-3-phospho]-glycerol + CoA. The catalysed reaction is a 1-acyl-sn-glycero-3-phospho-(1D-myo-inositol) + octadecanoyl-CoA = a 1-acyl-2-octadecanoyl-sn-glycero-3-phospho-(1D-myo-inositol) + CoA. The enzyme catalyses a 2-acyl-sn-glycero-3-phospho-D-myo-inositol + octadecanoyl-CoA = 1-octadecanoyl-2-acyl-sn-glycero-3-phospho-1D-myo-inositol + CoA. Its pathway is phospholipid metabolism; CDP-diacylglycerol biosynthesis; CDP-diacylglycerol from sn-glycerol 3-phosphate: step 2/3. Exhibits acyl-CoA:lysocardiolipin acyltransferase (ALCAT) activity; catalyzes the reacylation of lyso-cardiolipin to cardiolipin (CL), a key step in CL remodeling. Recognizes both monolysocardiolipin and dilysocardiolipin as substrates with a preference for linoleoyl-CoA and oleoyl-CoA as acyl donors. Also exhibits 1-acyl-sn-glycerol-3-phosphate acyltransferase activity (AGPAT) activity; converts 1-acyl-sn-glycerol-3- phosphate (lysophosphatidic acid or LPA) into 1,2-diacyl-sn-glycerol-3- phosphate (phosphatidic acid or PA) by incorporating an acyl moiety at the sn-2 position of the glycerol backbone. Possesses both lysophosphatidylinositol acyltransferase (LPIAT) and lysophosphatidylglycerol acyltransferase (LPGAT) activities. Required for establishment of the hematopoietic and endothelial lineages. This is Lysocardiolipin acyltransferase 1 (LCLAT1) from Gallus gallus (Chicken).